We begin with the raw amino-acid sequence, 1225 residues long: Hybrid signal transduction histidine kinase C (1225 aa).

The chain crosses the membrane as a helical span at residues 8–28 (GFLLSTLFFTIISIILFYFFI). The span at 313–356 (LSPRSLSSSSSSSPSSSNNNGNTNNSGSLSPRSSNSNGSAVSPR) shows a compositional bias: low complexity. A disordered region spans residues 313–407 (LSPRSLSSSS…SNGTISSPRT (95 aa)). A compositionally biased stretch (polar residues) spans 357-368 (NVSSNSMSPRGQ). The segment covering 370-388 (SDRSISSPRGSSSSSSSSS) has biased composition (low complexity). Polar residues predominate over residues 389-407 (NELAISPRNSNGTISSPRT). One can recognise a Histidine kinase domain in the interval 426-653 (HLSHELRTPI…TFHFVIPLET (228 aa)). Position 429 is a phosphohistidine; by autocatalysis (H429). The region spanning 669 to 784 (SVLVVDKNPY…HLVACLLASM (116 aa)) is the Response regulatory 1 domain. D721 bears the 4-aspartylphosphate mark. 3 disordered regions span residues 809–832 (NNIN…SVYG), 941–974 (DDDS…DELN), and 1021–1076 (YLSP…PRAP). Residues 945–954 (NNYCNTTGTM) show a composition bias toward polar residues. Positions 1023–1037 (SPRSMNNNNGNNDNG) are enriched in low complexity. A compositionally biased stretch (polar residues) spans 1058 to 1072 (TSDTSSLAQSPNSLS). A Response regulatory 2 domain is found at 1078 to 1200 (KIMILDDNPV…CLELILRKWE (123 aa)). Residue D1127 is modified to 4-aspartylphosphate.

It is found in the membrane. The catalysed reaction is ATP + protein L-histidine = ADP + protein N-phospho-L-histidine.. In terms of biological role, acts in a signal transduction pathway that regulates the slug versus culmination choice. Believed to be the first component of a phosphorelay that couples the sensing of ammonia to the modulation of PKA activity and hence activates culmination and spore germination. Ammonium transporters amtA and amtC are thought to respectively activate and inhibit dhkC phosphorelay. This protein probably undergoes an ATP-dependent autophosphorylation at conserved His residue in the kinase core, and a phosphoryl group is then transferred to a conserved aspartate residue in the receiver domain. This is Hybrid signal transduction histidine kinase C (dhkC) from Dictyostelium discoideum (Social amoeba).